Consider the following 305-residue polypeptide: Recombination-associated protein RdgC (305 aa).

It belongs to the RdgC family.

The protein resides in the cytoplasm. It is found in the nucleoid. Functionally, may be involved in recombination. The polypeptide is Recombination-associated protein RdgC (Sodalis glossinidius (strain morsitans)).